The primary structure comprises 119 residues: Large ribosomal subunit protein uL18 (119 aa).

Residues 1 to 20 form a disordered region; the sequence is MSQIDKAARRQKIKARSRAT. Positions 9 to 19 are enriched in basic residues; that stretch reads RRQKIKARSRA.

Belongs to the universal ribosomal protein uL18 family. As to quaternary structure, part of the 50S ribosomal subunit; part of the 5S rRNA/L5/L18/L25 subcomplex. Contacts the 5S and 23S rRNAs.

Functionally, this is one of the proteins that bind and probably mediate the attachment of the 5S RNA into the large ribosomal subunit, where it forms part of the central protuberance. In Chlorobaculum parvum (strain DSM 263 / NCIMB 8327) (Chlorobium vibrioforme subsp. thiosulfatophilum), this protein is Large ribosomal subunit protein uL18.